The sequence spans 838 residues: Extragenic suppressor of kinetochore protein 1 (838 aa).

A phosphoserine mark is found at serine 411 and serine 418. A disordered region spans residues serine 411–serine 468. Threonine 419 carries the phosphothreonine modification. A compositionally biased stretch (basic and acidic residues) spans lysine 423–glycine 442. Phosphoserine occurs at positions 425, 459, 468, and 491. Polar residues predominate over residues threonine 448–proline 460. Phosphothreonine is present on threonine 493. At serine 494 the chain carries Phosphoserine. Residues glutamate 690–valine 700 are compositionally biased toward acidic residues. Disordered stretches follow at residues glutamate 690–asparagine 745 and isoleucine 757–lysine 838. Residues serine 711 and serine 713 each carry the phosphoserine modification. The segment covering asparagine 714–aspartate 723 has biased composition (acidic residues). Residues proline 724–serine 734 show a composition bias toward basic and acidic residues. Acidic residues-rich tracts occupy residues serine 768–valine 779 and serine 806–aspartate 818.

This sequence belongs to the SAPS family. In terms of assembly, interacts with ppe1 and mis12.

The protein resides in the nucleus. Has a role in chromosome segregation. May provide a dynamic connection between kinetochore microtubules and kinetochore chromatin. The sequence is that of Extragenic suppressor of kinetochore protein 1 (ekc1) from Schizosaccharomyces pombe (strain 972 / ATCC 24843) (Fission yeast).